The chain runs to 293 residues: Formamidopyrimidine-DNA glycosylase (293 aa).

Pro-2 acts as the Schiff-base intermediate with DNA in catalysis. Glu-3 (proton donor) is an active-site residue. The active-site Proton donor; for beta-elimination activity is Lys-60. Residues His-110, Arg-129, and Arg-174 each coordinate DNA. Residues 259–293 (NVYRRTGKECRKCGNLIEKQKIAGRSTHWCPNCQK) form an FPG-type zinc finger. The active-site Proton donor; for delta-elimination activity is the Arg-283.

It belongs to the FPG family. In terms of assembly, monomer. It depends on Zn(2+) as a cofactor.

The enzyme catalyses Hydrolysis of DNA containing ring-opened 7-methylguanine residues, releasing 2,6-diamino-4-hydroxy-5-(N-methyl)formamidopyrimidine.. The catalysed reaction is 2'-deoxyribonucleotide-(2'-deoxyribose 5'-phosphate)-2'-deoxyribonucleotide-DNA = a 3'-end 2'-deoxyribonucleotide-(2,3-dehydro-2,3-deoxyribose 5'-phosphate)-DNA + a 5'-end 5'-phospho-2'-deoxyribonucleoside-DNA + H(+). Involved in base excision repair of DNA damaged by oxidation or by mutagenic agents. Acts as a DNA glycosylase that recognizes and removes damaged bases. Has a preference for oxidized purines, such as 7,8-dihydro-8-oxoguanine (8-oxoG). Has AP (apurinic/apyrimidinic) lyase activity and introduces nicks in the DNA strand. Cleaves the DNA backbone by beta-delta elimination to generate a single-strand break at the site of the removed base with both 3'- and 5'-phosphates. The chain is Formamidopyrimidine-DNA glycosylase from Prochlorococcus marinus (strain MIT 9312).